Here is a 169-residue protein sequence, read N- to C-terminus: Putative phosphoesterase SAR0985 (169 aa).

The active-site Proton donor is the His34. 2 short sequence motifs (HXTX) span residues 34 to 37 and 115 to 118; these read HVTI and HFTI. His115 functions as the Proton acceptor in the catalytic mechanism.

This sequence belongs to the 2H phosphoesterase superfamily. YjcG family.

This Staphylococcus aureus (strain MRSA252) protein is Putative phosphoesterase SAR0985.